The sequence spans 224 residues: Charged multivesicular body protein 4c (224 aa).

Disordered regions lie at residues methionine 1–glutamine 21 and serine 182–methionine 224. Positions leucine 7–glycine 17 are enriched in gly residues. Residues glutamine 21–alanine 221 are a coiled coil.

Belongs to the SNF7 family. As to quaternary structure, probable core component of the endosomal sorting required for transport complex III (ESCRT-III). ESCRT-III components are thought to multimerize to form a flat lattice on the perimeter membrane of the endosome.

The protein resides in the cytoplasm. Its subcellular location is the cytosol. It localises to the late endosome membrane. Functionally, probable core component of the endosomal sorting required for transport complex III (ESCRT-III) which is involved in multivesicular bodies (MVBs) formation and sorting of endosomal cargo proteins into MVBs. MVBs contain intraluminal vesicles (ILVs) that are generated by invagination and scission from the limiting membrane of the endosome and mostly are delivered to lysosomes enabling degradation of membrane proteins, such as stimulated growth factor receptors, lysosomal enzymes and lipids. Key component of the cytokinesis checkpoint, a process required to delay abscission to prevent both premature resolution of intercellular chromosome bridges and accumulation of DNA damage. This is Charged multivesicular body protein 4c (chmp4c) from Danio rerio (Zebrafish).